Here is a 231-residue protein sequence, read N- to C-terminus: LexA repressor (231 aa).

A DNA-binding region (H-T-H motif) is located at residues 31–51 (RAEIATEFGFRSANAAEEHLQ). Residues serine 148 and lysine 185 each act as for autocatalytic cleavage activity in the active site.

Belongs to the peptidase S24 family. In terms of assembly, homodimer.

It carries out the reaction Hydrolysis of Ala-|-Gly bond in repressor LexA.. Its function is as follows. Represses a number of genes involved in the response to DNA damage (SOS response), including recA and lexA. In the presence of single-stranded DNA, RecA interacts with LexA causing an autocatalytic cleavage which disrupts the DNA-binding part of LexA, leading to derepression of the SOS regulon and eventually DNA repair. The protein is LexA repressor of Leptothrix cholodnii (strain ATCC 51168 / LMG 8142 / SP-6) (Leptothrix discophora (strain SP-6)).